The following is a 759-amino-acid chain: NADP-dependent malic enzyme (759 aa).

Residues Met1 to Asn428 form a malic enzyme region. Tyr39 functions as the Proton donor in the catalytic mechanism. Residue Lys94 is the Proton acceptor of the active site. A divalent metal cation is bound by residues Glu136, Asp137, and Asp162. NADP(+) is bound by residues Ala195–Ala198, Asn288, and Asn320. Residues Leu429 to Leu759 are phosphate acetyltransferase.

It in the N-terminal section; belongs to the malic enzymes family. The protein in the C-terminal section; belongs to the phosphate acetyltransferase and butyryltransferase family. Requires Mg(2+) as cofactor. The cofactor is Mn(2+).

It catalyses the reaction (S)-malate + NADP(+) = pyruvate + CO2 + NADPH. It carries out the reaction oxaloacetate + H(+) = pyruvate + CO2. The chain is NADP-dependent malic enzyme (maeB) from Salmonella typhimurium (strain LT2 / SGSC1412 / ATCC 700720).